The chain runs to 166 residues: UPF0336 protein Mb0656 (166 aa).

This sequence belongs to the UPF0336 family.

In Mycobacterium bovis (strain ATCC BAA-935 / AF2122/97), this protein is UPF0336 protein Mb0656.